A 62-amino-acid chain; its full sequence is MAKCEVCSKATSFGNSRSHALNATSRTWKPNVRKIKIIDNGTPRSIKICTRCLRSNKVTRAI.

It belongs to the bacterial ribosomal protein bL28 family.

This is Large ribosomal subunit protein bL28 from Ruminiclostridium cellulolyticum (strain ATCC 35319 / DSM 5812 / JCM 6584 / H10) (Clostridium cellulolyticum).